The sequence spans 170 residues: Cytidine diphosphoramidate kinase (170 aa).

This sequence belongs to the APS kinase family.

It catalyses the reaction cytidine 5'-diphosphoramidate + ATP = cytidine 3'-phospho-5'-diphosphoramidate + ADP + H(+). The protein operates within capsule biogenesis; capsule polysaccharide biosynthesis. Functionally, involved in the biosynthesis of the O-methyl phosphoramidate (MeOPN) group found on the capsular polysaccharide (CPS) of C.jejuni. Catalyzes the ATP-dependent phosphorylation of cytidine diphosphoramidate (CDP-NH(2)) to form cytidine 3'-phosphate 5'-diphosphoramidate. Can also use other substrates such as the corresponding adenine and uridine diphosphoramidate derivatives or cytidine diphosphoramidate analogs, with lower efficiency. The chain is Cytidine diphosphoramidate kinase from Campylobacter jejuni subsp. jejuni serotype O:2 (strain ATCC 700819 / NCTC 11168).